The following is a 927-amino-acid chain: MALKSPAFRKKFPLLVTGSLLAMQPLATQFVVAAEQYDCSVSASGAWNCAPKSTAAAVELPPRPVHSTASVSSNGTVTSESSSSGEQVAGPQLVTEAKGKGLKSRSADYSHLDWVPREKLTAAQLAETGPYCSGAYVEPIRPGMDDKTPMKDAPMFVGAKASRYEQEAQVATLAGDVVLRQGSMQVQAQEAALHQAENRGELNGDVRLRDNGALIVGDKAELQLDTGEARVDNAEYVLHKSNIRGNALYAKRAENAIIRLKDGTYTTCEPNSNAWTLKGNNITLNPATGFGTATNVTLRVKDIPVLYTPYIYFPIDDRRQSGFLPPTIAAGGDNGFTLVTPYYFNLAPNYDATLYPRYMADRGLLMEGEFRYLTKGSEGQFGGAYLNDENDDRKLQSDYDKTRWMINWHHKGGLDTRWLTQVDYTDISDPYYFQDLETDQIGVKRTDFLNQQGSLTYRGDSYSAVFNAQAYKLATVANVTPYNRLPQLTLNGTLPYNPEGLKFDYQTEAVRFDRDLRTGTFVDENGNFESRLDNNISGLDRANGDRLNLAPSVSLPMNWSYGFLTPKVKYVYTQYDLSLDGTGKSQLAASGGTFDSSVNRSVPIFSVDSGLYFDRNTNWFGKDYRQTLEPRLFYLYVPEKDQTDIPAFDTSESTFSYSSLFRDNRFTGSDRIGDENKLSLGITNRWIEDNGFERQRFAIGQAIYFSDRKVQLPGVSFADRDDAKANVSPYALEYEYRFNRDWRFNSDFNWDPDSKSTRSGSAMFHYQPEAEPNKIVNFGYRYRNDQIRYDESTGRWIVGGGDYGRPGDPNYVKDYYKIQQHDFSVIWPIVPQWSLISRWQYDYNRERTIEAFGGFEYDNCCWKMRLVNRYWIDYDEFSQAAPQNEKGDRGIFLQIVLKGLGGVTGAKVDSFLDKGIQGYREREDQAF.

The first 22 residues, 1–22, serve as a signal peptide directing secretion; the sequence is MALKSPAFRKKFPLLVTGSLLA. Residues 60–100 form a disordered region; that stretch reads LPPRPVHSTASVSSNGTVTSESSSSGEQVAGPQLVTEAKGK. Over residues 70–86 the composition is skewed to low complexity; the sequence is SVSSNGTVTSESSSSGE.

This sequence belongs to the LptD family. As to quaternary structure, component of the lipopolysaccharide transport and assembly complex. Interacts with LptE and LptA.

The protein localises to the cell outer membrane. In terms of biological role, together with LptE, is involved in the assembly of lipopolysaccharide (LPS) at the surface of the outer membrane. The protein is LPS-assembly protein LptD of Pseudomonas syringae pv. tomato (strain ATCC BAA-871 / DC3000).